A 384-amino-acid polypeptide reads, in one-letter code: Glucose-fructose oxidoreductase domain-containing protein 2 (384 aa).

The first 25 residues, methionine 1–alanine 25, serve as a signal peptide directing secretion. Positions glycine 358–leucine 384 are disordered. The segment covering serine 372–leucine 384 has biased composition (polar residues).

Belongs to the Gfo/Idh/MocA family.

It is found in the secreted. Its subcellular location is the extracellular space. The protein localises to the extracellular matrix. Promotes matrix assembly. The protein is Glucose-fructose oxidoreductase domain-containing protein 2 (gfod2) of Xenopus tropicalis (Western clawed frog).